The sequence spans 179 residues: Large ribosomal subunit protein uL5 (179 aa).

It belongs to the universal ribosomal protein uL5 family. As to quaternary structure, part of the 50S ribosomal subunit; part of the 5S rRNA/L5/L18/L25 subcomplex. Contacts the 5S rRNA and the P site tRNA. Forms a bridge to the 30S subunit in the 70S ribosome.

Its function is as follows. This is one of the proteins that bind and probably mediate the attachment of the 5S RNA into the large ribosomal subunit, where it forms part of the central protuberance. In the 70S ribosome it contacts protein S13 of the 30S subunit (bridge B1b), connecting the 2 subunits; this bridge is implicated in subunit movement. Contacts the P site tRNA; the 5S rRNA and some of its associated proteins might help stabilize positioning of ribosome-bound tRNAs. This chain is Large ribosomal subunit protein uL5, found in Parasynechococcus marenigrum (strain WH8102).